The following is a 54-amino-acid chain: Large ribosomal subunit protein uL15 (54 aa).

The segment covering methionine 1–glycine 30 has biased composition (basic residues). The disordered stretch occupies residues methionine 1–arginine 42. Histidine 39 is modified ((3S)-3-hydroxyhistidine). Lysine 47 bears the N6-acetyllysine mark.

The protein belongs to the universal ribosomal protein uL15 family. Component of the large ribosomal subunit. Hydroxylated on His-39 by MINA.

The protein resides in the cytoplasm. Functionally, component of the large ribosomal subunit. The ribosome is a large ribonucleoprotein complex responsible for the synthesis of proteins in the cell. This Sus scrofa (Pig) protein is Large ribosomal subunit protein uL15 (RPL27A).